The chain runs to 275 residues: uncharacterized protein (275 aa).

Polar residues predominate over residues 148 to 158; sequence TFPTTAPSITP. The segment at 148 to 173 is disordered; the sequence is TFPTTAPSITPGNKEGEKTTSTDTDE. Residues 187–207 form a helical membrane-spanning segment; that stretch reads ILIAVTLLLSGVAIIVFVIFE. Positions 234 to 264 are disordered; it reads GQPPGTAESKPDSQPQKVGQDAANSSNPKKA. The span at 245 to 261 shows a compositional bias: polar residues; it reads DSQPQKVGQDAANSSNP.

The protein localises to the membrane. This is an uncharacterized protein from Homo sapiens (Human).